The following is a 161-amino-acid chain: MADGLDFTGMLRSAGLRITRPRLAVLNAVKEHPHAETDHVIRAVRVQLPDVSHQTVYDXLNALTAAGLVRRIQPTGSVARYETRVNDNHHHVVCRSCGAIADVDCAVGDAPCLTAADDNGFDIDEAEVIYWASALTARDLRVLDDSPVAHQMKGKAMPPNT.

Residues cysteine 94 and cysteine 97 each coordinate Zn(2+).

Belongs to the Fur family.

The protein localises to the cytoplasm. In terms of biological role, acts as a global negative controlling element, employing Fe(2+) as a cofactor to bind the operator of the repressed genes. This Mycolicibacterium fortuitum (Mycobacterium fortuitum) protein is Ferric uptake regulation protein 1 (fur1).